We begin with the raw amino-acid sequence, 449 residues long: MAYPGGMAIPCQDTAAAPRPAAVSALPARSSPYLRRVAVLSLHTSPWAQPGTGDAGGMNVYIRNTSTVLARRGVAVEIFTRATSSDDPPSWEPVPGVTLHNVVAGPFEGLRKEELPSQLCAFTAGVLRECVGHEAWRHSLVHSHYWLSGQVGWLIKDRLGVPLVHTAHTLAAVKNVTLAEGDVPEPLQRLVGEGQLVAESDRMVANTQVEAGHLTQYYAADPQKIDVVPPGVDLGMFRPGDKAAARAELGLDPSEQVVAFVGRIQPLKGPDILLAAMAEVMRAKPGVRLLVVGEASGSGLSPEGIMATAERLGVADNVTMWPAQPPAQLAKVYRAADLVAVPSHSESFGLVAIEAQACGTPVVAAKVGGLPVAVADQVSGVLVDSWAPERWQAEIASLLAAPERLRAMGRAGVAHAGRFSWEATADGLLASYRAALRGGALAPMRAVRG.

Residue H43 coordinates 1D-myo-inositol 3-phosphate. UDP-N-acetyl-alpha-D-glucosamine contacts are provided by residues 49 to 50 (QP) and G57. 1D-myo-inositol 3-phosphate contacts are provided by residues 54–59 (DAGGMN), K112, Y145, T169, and R189. Positions 263, 268, and 324 each coordinate UDP-N-acetyl-alpha-D-glucosamine. The Mg(2+) site is built by Y333, R334, and A336. UDP-N-acetyl-alpha-D-glucosamine contacts are provided by E346 and E354. T360 provides a ligand contact to Mg(2+).

Belongs to the glycosyltransferase group 1 family. MshA subfamily. As to quaternary structure, homodimer.

The enzyme catalyses 1D-myo-inositol 3-phosphate + UDP-N-acetyl-alpha-D-glucosamine = 1D-myo-inositol 2-acetamido-2-deoxy-alpha-D-glucopyranoside 3-phosphate + UDP + H(+). Its function is as follows. Catalyzes the transfer of a N-acetyl-glucosamine moiety to 1D-myo-inositol 3-phosphate to produce 1D-myo-inositol 2-acetamido-2-deoxy-glucopyranoside 3-phosphate in the mycothiol biosynthesis pathway. This is D-inositol 3-phosphate glycosyltransferase from Segniliparus rotundus (strain ATCC BAA-972 / CDC 1076 / CIP 108378 / DSM 44985 / JCM 13578).